The sequence spans 305 residues: Putative UDP-glucose 4-epimerase (305 aa).

NAD(+) is bound by residues 10–11 (FI), 30–35 (DNLTTG), 50–51 (DI), and 71–75 (QAAQI). Residues S115 and Y140 each coordinate substrate. NAD(+)-binding residues include Y140 and K144. The active-site Proton acceptor is the Y140. Substrate is bound by residues N169, 183 to 184 (VI), 198 to 200 (IIF), R207, and 263 to 266 (REGE).

This sequence belongs to the NAD(P)-dependent epimerase/dehydratase family. It depends on NAD(+) as a cofactor.

It catalyses the reaction UDP-alpha-D-glucose = UDP-alpha-D-galactose. It participates in carbohydrate metabolism; galactose metabolism. Involved in the metabolism of galactose. Catalyzes the conversion of UDP-galactose (UDP-Gal) to UDP-glucose (UDP-Glc) through a mechanism involving the transient reduction of NAD. This Methanocaldococcus jannaschii (strain ATCC 43067 / DSM 2661 / JAL-1 / JCM 10045 / NBRC 100440) (Methanococcus jannaschii) protein is Putative UDP-glucose 4-epimerase.